The primary structure comprises 541 residues: Putative asparagine synthetase [glutamine-hydrolyzing] 1 (541 aa).

Cysteine 2 (for GATase activity) is an active-site residue. Positions 2–213 constitute a Glutamine amidotransferase type-2 domain; the sequence is CSISGIIVKD…PNSQLIYYLD (212 aa). L-glutamine-binding positions include 68–72, 92–94, and aspartate 116; these read RLAIV and NGE. Residues valine 289 and 363–364 each bind ATP; that span reads SG.

The protein belongs to the asparagine synthetase family.

It carries out the reaction L-aspartate + L-glutamine + ATP + H2O = L-asparagine + L-glutamate + AMP + diphosphate + H(+). Its pathway is amino-acid biosynthesis; L-asparagine biosynthesis; L-asparagine from L-aspartate (L-Gln route): step 1/1. This chain is Putative asparagine synthetase [glutamine-hydrolyzing] 1, found in Methanocaldococcus jannaschii (strain ATCC 43067 / DSM 2661 / JAL-1 / JCM 10045 / NBRC 100440) (Methanococcus jannaschii).